The sequence spans 124 residues: Small ribosomal subunit protein uS13 (124 aa).

The disordered stretch occupies residues 95–124 (GLPVRGQRTKTNARTRKGPKRTVAGKKKAR).

The protein belongs to the universal ribosomal protein uS13 family. Part of the 30S ribosomal subunit. Forms a loose heterodimer with protein S19. Forms two bridges to the 50S subunit in the 70S ribosome.

Its function is as follows. Located at the top of the head of the 30S subunit, it contacts several helices of the 16S rRNA. In the 70S ribosome it contacts the 23S rRNA (bridge B1a) and protein L5 of the 50S subunit (bridge B1b), connecting the 2 subunits; these bridges are implicated in subunit movement. Contacts the tRNAs in the A and P-sites. The protein is Small ribosomal subunit protein uS13 of Leifsonia xyli subsp. xyli (strain CTCB07).